The following is a 309-amino-acid chain: Ribonuclease Z (309 aa).

7 residues coordinate Zn(2+): histidine 63, histidine 65, aspartate 67, histidine 68, histidine 141, aspartate 212, and histidine 270. Catalysis depends on aspartate 67, which acts as the Proton acceptor.

The protein belongs to the RNase Z family. In terms of assembly, homodimer. Requires Zn(2+) as cofactor.

The catalysed reaction is Endonucleolytic cleavage of RNA, removing extra 3' nucleotides from tRNA precursor, generating 3' termini of tRNAs. A 3'-hydroxy group is left at the tRNA terminus and a 5'-phosphoryl group is left at the trailer molecule.. Its function is as follows. Zinc phosphodiesterase, which displays some tRNA 3'-processing endonuclease activity. Probably involved in tRNA maturation, by removing a 3'-trailer from precursor tRNA. The sequence is that of Ribonuclease Z from Halalkalibacterium halodurans (strain ATCC BAA-125 / DSM 18197 / FERM 7344 / JCM 9153 / C-125) (Bacillus halodurans).